A 266-amino-acid polypeptide reads, in one-letter code: GTP cyclohydrolase FolE2 (266 aa).

The protein belongs to the GTP cyclohydrolase IV family.

It catalyses the reaction GTP + H2O = 7,8-dihydroneopterin 3'-triphosphate + formate + H(+). The protein operates within cofactor biosynthesis; 7,8-dihydroneopterin triphosphate biosynthesis; 7,8-dihydroneopterin triphosphate from GTP: step 1/1. Converts GTP to 7,8-dihydroneopterin triphosphate. This is GTP cyclohydrolase FolE2 from Syntrophotalea carbinolica (strain DSM 2380 / NBRC 103641 / GraBd1) (Pelobacter carbinolicus).